We begin with the raw amino-acid sequence, 377 residues long: Histidinol-phosphate aminotransferase (377 aa).

K230 carries the N6-(pyridoxal phosphate)lysine modification.

Belongs to the class-II pyridoxal-phosphate-dependent aminotransferase family. Histidinol-phosphate aminotransferase subfamily. Homodimer. Pyridoxal 5'-phosphate serves as cofactor.

The enzyme catalyses L-histidinol phosphate + 2-oxoglutarate = 3-(imidazol-4-yl)-2-oxopropyl phosphate + L-glutamate. It participates in amino-acid biosynthesis; L-histidine biosynthesis; L-histidine from 5-phospho-alpha-D-ribose 1-diphosphate: step 7/9. This Mycobacterium leprae (strain Br4923) protein is Histidinol-phosphate aminotransferase.